A 74-amino-acid chain; its full sequence is DNA-directed RNA polymerase subunit omega (74 aa).

This sequence belongs to the RNA polymerase subunit omega family. The RNAP catalytic core consists of 2 alpha, 1 beta, 1 beta' and 1 omega subunit. When a sigma factor is associated with the core the holoenzyme is formed, which can initiate transcription.

It carries out the reaction RNA(n) + a ribonucleoside 5'-triphosphate = RNA(n+1) + diphosphate. Its function is as follows. Promotes RNA polymerase assembly. Latches the N- and C-terminal regions of the beta' subunit thereby facilitating its interaction with the beta and alpha subunits. In Campylobacter jejuni subsp. jejuni serotype O:6 (strain 81116 / NCTC 11828), this protein is DNA-directed RNA polymerase subunit omega.